A 267-amino-acid chain; its full sequence is Centromere protein Q (267 aa).

2 stretches are compositionally biased toward basic residues: residues 1 to 22 (MSGK…LKQR) and 39 to 49 (KRNRSHAKHLS). The interval 1 to 54 (MSGKARASRKKPQQVKRSLKQRANKEADLPENEVGNTAKRNRSHAKHLSSKVTG) is disordered. A Phosphoserine modification is found at Ser49. Residues 100-202 (IKRKEEIQCH…EEQEVKQVFH (103 aa)) are a coiled coil.

It belongs to the CENP-Q/OKP1 family. In terms of assembly, component of the CENPA-CAD complex, composed of CENPI, CENPK, CENPL, CENPO, CENPP, CENPQ, CENPR and CENPS. The CENPA-CAD complex interacts with the CENPA-NAC complex, at least composed of CENPA, CENPC, CENPH, CENPM, CENPN, CENPT and CENPU. Post-translationally, phosphorylation at Ser-49 is essential for CENPE recruitment to kinetochores and orderly chromosome congression.

It localises to the nucleus. The protein resides in the chromosome. The protein localises to the centromere. Its function is as follows. Component of the CENPA-CAD (nucleosome distal) complex, a complex recruited to centromeres which is involved in assembly of kinetochore proteins, mitotic progression and chromosome segregation. May be involved in incorporation of newly synthesized CENPA into centromeres via its interaction with the CENPA-NAC complex. Plays an important role in chromosome congression and in the recruitment of CENP-O complex (which comprises CENPO, CENPP, CENPQ and CENPU), CENPE and PLK1 to the kinetochores. The polypeptide is Centromere protein Q (Cenpq) (Mus musculus (Mouse)).